We begin with the raw amino-acid sequence, 191 residues long: Scytalone dehydratase PfmaJ (191 aa).

Y25, Y45, and F48 together coordinate substrate. Active-site residues include H80 and H105. A substrate-binding site is contributed by N126.

This sequence belongs to the scytalone dehydratase family. As to quaternary structure, homotrimer. Each subunit contains an active site, located in the central part of the hydrophobic core of the monomer, which functions independently.

The protein localises to the endosome. The enzyme catalyses scytalone = 1,3,8-trihydroxynaphthalene + H2O. Its pathway is pigment biosynthesis; melanin biosynthesis. Scytalone dehydratase involved the biosynthesis of dihydroxynaphthalene (DHN)-melanin, a bluish-green pigment forming a dark layer in the conidial wall that protects the conidia from UV radiations. The first step of the pathway is the production of the pentaketide 1,3,6,8-tetrahydroxynaphthalene (1,3,6,8-THN or T4HN) by the polyketide synthase PfmaE though condensation of acetyl-CoA with malonyl-CoA. T4HN is not stable and easily oxidizes into the stable form flaviolin. T4HN is also substrate of the hydroxynaphthalene reductase PfmaG to yield scytalone. The scytalone dehydratase PfmaJ then reduces scytalone to 1,3,8-THN. 1,3,8-THN is then substrate of the hydroxynaphthalene reductase PfmaI to yield vermelone. Vermelone is further converted by the multicopper oxidase PfmaD to 1,8-DHN. Finally the laccase PFICI_06862 transforms 1,8-DHN to DHN-melanin. The roles of the 5-oxoprolinase PfmaA and the proline iminopeptidase PfmaB within the cluster have not been elucidated yet. This is Scytalone dehydratase PfmaJ from Pestalotiopsis fici (strain W106-1 / CGMCC3.15140).